Here is a 50-residue protein sequence, read N- to C-terminus: Conotoxin Bu13 (50 aa).

A signal peptide is located at residue A1. Positions 2–24 (EDSRGTQLHRALRKTTKLSLSIR) are excised as a propeptide. 3 cysteine pairs are disulfide-bonded: C25/C40, C32/C44, and C39/C49.

Belongs to the conotoxin O1 superfamily. As to expression, expressed by the venom duct.

It is found in the secreted. In Conus bullatus (Bubble cone), this protein is Conotoxin Bu13.